Here is a 521-residue protein sequence, read N- to C-terminus: Acidic amino acid decarboxylase GADL1 (521 aa).

An N6-(pyridoxal phosphate)lysine modification is found at Lys333.

It belongs to the group II decarboxylase family. In terms of assembly, homodimer. Pyridoxal 5'-phosphate serves as cofactor. As to expression, expressed very weakly in neurons and not detected in astrocytes, brain or liver.

The enzyme catalyses L-aspartate + H(+) = beta-alanine + CO2. It catalyses the reaction 3-sulfino-L-alanine + H(+) = hypotaurine + CO2. The catalysed reaction is L-cysteate + H(+) = taurine + CO2. Functionally, may catalyze the decarboxylation of L-aspartate, 3-sulfino-L-alanine (cysteine sulfinic acid), and L-cysteate to beta-alanine, hypotaurine and taurine, respectively. Does not exhibit any decarboxylation activity toward glutamate. This chain is Acidic amino acid decarboxylase GADL1 (GADL1), found in Homo sapiens (Human).